The following is a 601-amino-acid chain: Somatic embryogenesis receptor kinase 5 (601 aa).

Residues 1 to 24 (MEHGSSRGFIWLILFLDFVSRVTG) form the signal peptide. The Extracellular portion of the chain corresponds to 25 to 215 (KTQVDALIAL…SPSPSPSGTS (191 aa)). Residues N52, N81, N105, N129, N151, and N184 are each glycosylated (N-linked (GlcNAc...) asparagine). 5 LRR repeats span residues 71–94 (SVTR…AQLP), 95–118 (NLQY…GDLM), 119–141 (ELVS…LGKL), 143–165 (KLRF…LTAL), and 166–188 (PLDV…GSFS). The chain crosses the membrane as a helical span at residues 216–236 (AAIVVGVAAGAALLFALAWWL). The Cytoplasmic segment spans residues 237-601 (RRKLQGHFLD…IENDYPSGPR (365 aa)). T272 is subject to Phosphothreonine. One can recognise a Protein kinase domain in the interval 275-572 (FSKRNVLGKG…KEEMPIHDFN (298 aa)). ATP is bound at residue 281 to 289 (LGKGRFGIL). T298 carries the post-translational modification Phosphothreonine. K303 is a binding site for ATP. S356 and S359 each carry phosphoserine. D402 serves as the catalytic Proton acceptor. 3 positions are modified to phosphothreonine: T435, T436, and T441. Y449 is modified (phosphotyrosine). S451 carries the phosphoserine modification. T452 bears the Phosphothreonine mark. 2 positions are modified to phosphoserine: S456 and S506. T532 carries the post-translational modification Phosphothreonine.

The protein belongs to the protein kinase superfamily. Ser/Thr protein kinase family. Interacts with TMK4/BARK1. Post-translationally, autophosphorylated.

Its subcellular location is the cell membrane. It carries out the reaction L-seryl-[protein] + ATP = O-phospho-L-seryl-[protein] + ADP + H(+). It catalyses the reaction L-threonyl-[protein] + ATP = O-phospho-L-threonyl-[protein] + ADP + H(+). Functionally, serine/threonine-kinase of unknown function. The sequence is that of Somatic embryogenesis receptor kinase 5 (SERK5) from Arabidopsis thaliana (Mouse-ear cress).